A 206-amino-acid chain; its full sequence is ATP synthase subunit b (206 aa).

A helical transmembrane segment spans residues 14–34 (VMMPAAVCAAVIGLSALGFAA).

Belongs to the ATPase B chain family. F-type ATPases have 2 components, F(1) - the catalytic core - and F(0) - the membrane proton channel. F(1) has five subunits: alpha(3), beta(3), gamma(1), delta(1), epsilon(1). F(0) has three main subunits: a(1), b(2) and c(10-14). The alpha and beta chains form an alternating ring which encloses part of the gamma chain. F(1) is attached to F(0) by a central stalk formed by the gamma and epsilon chains, while a peripheral stalk is formed by the delta and b chains.

The protein localises to the cell inner membrane. Its function is as follows. F(1)F(0) ATP synthase produces ATP from ADP in the presence of a proton or sodium gradient. F-type ATPases consist of two structural domains, F(1) containing the extramembraneous catalytic core and F(0) containing the membrane proton channel, linked together by a central stalk and a peripheral stalk. During catalysis, ATP synthesis in the catalytic domain of F(1) is coupled via a rotary mechanism of the central stalk subunits to proton translocation. Component of the F(0) channel, it forms part of the peripheral stalk, linking F(1) to F(0). The polypeptide is ATP synthase subunit b (Geobacter metallireducens (strain ATCC 53774 / DSM 7210 / GS-15)).